The primary structure comprises 97 residues: Co-chaperonin GroES (97 aa).

It belongs to the GroES chaperonin family. As to quaternary structure, heptamer of 7 subunits arranged in a ring. Interacts with the chaperonin GroEL.

Its subcellular location is the cytoplasm. Functionally, together with the chaperonin GroEL, plays an essential role in assisting protein folding. The GroEL-GroES system forms a nano-cage that allows encapsulation of the non-native substrate proteins and provides a physical environment optimized to promote and accelerate protein folding. GroES binds to the apical surface of the GroEL ring, thereby capping the opening of the GroEL channel. The chain is Co-chaperonin GroES from Buchnera aphidicola subsp. Pemphigus spyrothecae.